The primary structure comprises 630 residues: Arginine--tRNA ligase (630 aa).

A 'HIGH' region motif is present at residues 120–130 (ANPIHPLHIGH).

The protein belongs to the class-I aminoacyl-tRNA synthetase family.

It localises to the cytoplasm. The enzyme catalyses tRNA(Arg) + L-arginine + ATP = L-arginyl-tRNA(Arg) + AMP + diphosphate. This Pyrobaculum arsenaticum (strain DSM 13514 / JCM 11321 / PZ6) protein is Arginine--tRNA ligase.